The following is a 319-amino-acid chain: Tetrahydromethanopterin S-methyltransferase subunit H (319 aa).

Belongs to the MtrH family. In terms of assembly, the complex is composed of 8 subunits; MtrA, MtrB, MtrC, MtrD, MtrE, MtrF, MtrG and MtrH.

The enzyme catalyses 5-methyl-5,6,7,8-tetrahydromethanopterin + coenzyme M + 2 Na(+)(in) = 5,6,7,8-tetrahydromethanopterin + methyl-coenzyme M + 2 Na(+)(out). Its pathway is one-carbon metabolism; methanogenesis from CO(2); methyl-coenzyme M from 5,10-methylene-5,6,7,8-tetrahydromethanopterin: step 2/2. In terms of biological role, part of a complex that catalyzes the formation of methyl-coenzyme M and tetrahydromethanopterin from coenzyme M and methyl-tetrahydromethanopterin. This is an energy-conserving, sodium-ion translocating step. MtrH catalyzes the transfer of the methyl group from methyl-tetrahydromethanopterin to the corrinoid prosthetic group of MtrA. This chain is Tetrahydromethanopterin S-methyltransferase subunit H, found in Methanococcus aeolicus (strain ATCC BAA-1280 / DSM 17508 / OCM 812 / Nankai-3).